We begin with the raw amino-acid sequence, 38 residues long: Phospholipase A2 2 (38 aa).

Residues Tyr28, Gly30, and Gly32 each contribute to the Ca(2+) site.

Belongs to the phospholipase A2 family. Group I subfamily. Ca(2+) is required as a cofactor. As to expression, expressed by the venom gland.

Its subcellular location is the secreted. The catalysed reaction is a 1,2-diacyl-sn-glycero-3-phosphocholine + H2O = a 1-acyl-sn-glycero-3-phosphocholine + a fatty acid + H(+). Snake venom phospholipase A2 (PLA2) that inhibits neuromuscular transmission by blocking acetylcholine release from the nerve termini. PLA2 catalyzes the calcium-dependent hydrolysis of the 2-acyl groups in 3-sn-phosphoglycerides. This chain is Phospholipase A2 2, found in Calliophis bivirgatus (Blue Malaysian coral snake).